Consider the following 375-residue polypeptide: Growth/differentiation factor 8 (375 aa).

A signal peptide spans methionine 1–leucine 23. Positions aspartate 24–arginine 266 are excised as a propeptide. An N-linked (GlcNAc...) asparagine glycan is attached at asparagine 71. Disulfide bonds link cysteine 272/cysteine 282, cysteine 281/cysteine 340, cysteine 309/cysteine 372, and cysteine 313/cysteine 374.

Belongs to the TGF-beta family. As to quaternary structure, homodimer; disulfide-linked.

The protein resides in the secreted. Functionally, acts specifically as a negative regulator of skeletal muscle growth. This is Growth/differentiation factor 8 (MSTN) from Anser anser anser (Western greylag goose).